Consider the following 111-residue polypeptide: Translation initiation factor 1A 1 (111 aa).

The disordered stretch occupies residues 1–28 (MTLADLKKPTSRASPSTEETVTRVRTPR). The S1-like domain maps to 22–96 (TRVRTPRREN…EKADVIWKYT (75 aa)).

The protein belongs to the eIF-1A family.

In terms of biological role, seems to be required for maximal rate of protein biosynthesis. Enhances ribosome dissociation into subunits and stabilizes the binding of the initiator Met-tRNA(I) to 40 S ribosomal subunits. The sequence is that of Translation initiation factor 1A 1 (eIF1A1) from Methanosarcina mazei (strain ATCC BAA-159 / DSM 3647 / Goe1 / Go1 / JCM 11833 / OCM 88) (Methanosarcina frisia).